Reading from the N-terminus, the 363-residue chain is Adenosine deaminase (363 aa).

Residues histidine 42 and histidine 44 each coordinate Zn(2+). A purine D-ribonucleoside-binding positions include 44-46, aspartate 172, and glycine 201; that span reads HLD. A gating helix loop; regulates binding affinity for substrates and thus substrate selectivity region spans residues 170–184; sequence IGDTGHRAADIKASA. Histidine 226 contacts Zn(2+). A purine D-ribonucleoside contacts are provided by glutamate 229, histidine 253, and aspartate 310. A Zn(2+)-binding site is contributed by aspartate 310.

This sequence belongs to the metallo-dependent hydrolases superfamily. Adenosine and AMP deaminases family. Zn(2+) serves as cofactor.

It carries out the reaction adenosine + H2O + H(+) = inosine + NH4(+). The enzyme catalyses S-methyl-5'-thioadenosine + H2O + H(+) = S-methyl-5'-thioinosine + NH4(+). Its pathway is purine metabolism; purine nucleoside salvage. With respect to regulation, inhibited by coformycin and methylthiocoformycin (MT-coformycin). Functionally, catalyzes the hydrolytic deamination of adenosine to produce inosine. Unlike mammalian adenosine deaminases, also catalyzes the deamination of 5'-methylthioadenosine (MTA), a by-product of polyamine biosynthesis, to produce 5'-methylthioinosine (MTI). Plays an essential role in the purine salvage pathway which allows the parasite to use host cell purines for the synthesis of nucleic acids. In Plasmodium knowlesi, this protein is Adenosine deaminase.